The sequence spans 449 residues: Baeyer-Villiger oxidase GME11358 (449 aa).

This sequence belongs to the questin oxidase family.

It participates in secondary metabolite biosynthesis. In terms of biological role, baeyer-Villiger oxidase; part of the gene cluster that mediates the biosynthesis of dibenzodioxocinones such as pestalotiollide B, a novel class of inhibitors against cholesterol ester transfer protein (CEPT). The biosynthesis initiates from condensation of acetate and malonate units catalyzed by the non-reducing PKS pks8/GME11356. Pks8/GME11356 lacks a thioesterase (TE) domain, which is important to the cyclizing of the third ring of atrochrysone carboxylic acid, and the esterase GME11355 might play the role of TE and catalyzes the cyclization reaction of the C ring. The lactamase-like protein GME11357 (or other beta-lactamases in Pestalotiopsis microspora) probably hydrolyzes the thioester bond between the ACP of pks8/GME11356 and the intermediate to release atrochrysone carboxylic acid, which is spontaneously dehydrates to form endocrocin anthrone. Endocrocin anthrone is further converted to emodin via the endocrocin intermediate. Emodin is then oxidized by several enzymes such as the Baeyer-Villiger oxidase GME11358, the oxidoreductase GME11367, the short chain dehydrogenase/reductase GME11373, as well as by other oxidoreductases from the cluster, to modify the A and C rings and open the B ring, and finally yield monodictyphenone. The prenyltransferase GME11375 may catalyze the addition reaction between the C5 side chains and the carbon bone of dibenzodioxocinones. The remaining biochemical reactions to the final product dibenzodioxocinones should be methylation catalyzed by methyltransferase GME11366 and reduction and lactonization reaction catalyzed by a series of oxidordeuctases. The polypeptide is Baeyer-Villiger oxidase GME11358 (Pestalotiopsis microspora).